The primary structure comprises 431 residues: Cytochrome c oxidase subunit 3 (431 aa).

7 consecutive transmembrane segments (helical) span residues 70 to 90 (IAPL…FGVI), 96 to 116 (FVIA…SIVF), 132 to 152 (LVMG…SFFW), 176 to 196 (VYSY…SGAI), 321 to 341 (LYFT…EYYF), 356 to 376 (FLLT…IGII), and 408 to 428 (LFYW…IYWW).

The protein belongs to the cytochrome c oxidase subunit 3 family. As to quaternary structure, component of the cytochrome c oxidase (complex IV, CIV), a multisubunit enzyme composed of a catalytic core of 3 subunits and several supernumerary subunits. The complex exists as a monomer or a dimer and forms supercomplexes (SCs) in the inner mitochondrial membrane with ubiquinol-cytochrome c oxidoreductase (cytochrome b-c1 complex, complex III, CIII).

It is found in the mitochondrion inner membrane. The enzyme catalyses 4 Fe(II)-[cytochrome c] + O2 + 8 H(+)(in) = 4 Fe(III)-[cytochrome c] + 2 H2O + 4 H(+)(out). In terms of biological role, component of the cytochrome c oxidase, the last enzyme in the mitochondrial electron transport chain which drives oxidative phosphorylation. The respiratory chain contains 3 multisubunit complexes succinate dehydrogenase (complex II, CII), ubiquinol-cytochrome c oxidoreductase (cytochrome b-c1 complex, complex III, CIII) and cytochrome c oxidase (complex IV, CIV), that cooperate to transfer electrons derived from NADH and succinate to molecular oxygen, creating an electrochemical gradient over the inner membrane that drives transmembrane transport and the ATP synthase. Cytochrome c oxidase is the component of the respiratory chain that catalyzes the reduction of oxygen to water. Electrons originating from reduced cytochrome c in the intermembrane space (IMS) are transferred via the dinuclear copper A center (CU(A)) of subunit 2 and heme A of subunit 1 to the active site in subunit 1, a binuclear center (BNC) formed by heme A3 and copper B (CU(B)). The BNC reduces molecular oxygen to 2 water molecules using 4 electrons from cytochrome c in the IMS and 4 protons from the mitochondrial matrix. The protein is Cytochrome c oxidase subunit 3 (cox3) of Dictyostelium citrinum (Slime mold).